A 236-amino-acid chain; its full sequence is Small ribosomal subunit protein uS2c (236 aa).

Belongs to the universal ribosomal protein uS2 family.

It localises to the plastid. The protein localises to the chloroplast. This Oenothera parviflora (Small-flowered evening primrose) protein is Small ribosomal subunit protein uS2c (rps2).